The sequence spans 250 residues: Proteasome subunit alpha type-8 (250 aa).

This sequence belongs to the peptidase T1A family. As to quaternary structure, component of the outer alpha-ring of the 20S proteasome core which is composed of 28 subunits that are arranged in four stacked rings, resulting in a barrel-shaped structure. The catalytic chamber with the active sites is on the inside of the barrel. Interacts with canonical subunits of the spermatoproteasome, including proteasome activators PSME4 (also called PA200) and PSME3 (also called PA28-gamma). Interacts with proteasome-interacting proteins chaperones including CCT6B and CCT2, ubiquitin ligases (TRIP12, NEDD4, TRIM36 and RAD18), and ubiquitin specific proteases such as USP9X, USP34, USP5 and USP47. Interacts with meiotic proteins cyclin dependent kinase CDK1 and the ATPase TRIP13 as well as proteins of the synaptonemal complex SIX6OS1 and SYCE3.

Its subcellular location is the nucleus. Functionally, component of the spermatoproteasome, a proteasome specifically found in testis that promotes acetylation-dependent degradation of histones, thereby participating actively to the exchange of histones during spermatogenesis. The proteasome is a protein complex that degrades unneeded or damaged proteins by proteolysis, a chemical reaction that breaks peptide bonds. Required for 20S core proteasome assembly, essential for the degradation of meiotic proteins RAD51 and RPA1 at late prophase I and the progression of meiosis I during spermatogenesis. Localizes to the synaptonemal complex, a 'zipper'-like structure that holds homologous chromosome pairs in synapsis during meiotic prophase I. The polypeptide is Proteasome subunit alpha type-8 (Mus musculus (Mouse)).